The chain runs to 335 residues: Probable phosphoglycerate mutase ARB_03491 (335 aa).

The first 24 residues, 1–24 (MAGRILLGLTLLATSLPLLAMGDA), serve as a signal peptide directing secretion. His108 (tele-phosphohistidine intermediate) is an active-site residue. Catalysis depends on Glu211, which acts as the Proton donor/acceptor.

Belongs to the phosphoglycerate mutase family.

It localises to the secreted. Probable phosphomutase that may have a function related to the manipulation of phosphate groups on carbohydrates. This Arthroderma benhamiae (strain ATCC MYA-4681 / CBS 112371) (Trichophyton mentagrophytes) protein is Probable phosphoglycerate mutase ARB_03491.